Here is a 330-residue protein sequence, read N- to C-terminus: 4-hydroxythreonine-4-phosphate dehydrogenase (330 aa).

Residues H133 and T134 each coordinate substrate. Residues H163, H208, and H263 each coordinate a divalent metal cation. Residues K271, N280, and R289 each contribute to the substrate site.

This sequence belongs to the PdxA family. As to quaternary structure, homodimer. Zn(2+) is required as a cofactor. Requires Mg(2+) as cofactor. It depends on Co(2+) as a cofactor.

It localises to the cytoplasm. It carries out the reaction 4-(phosphooxy)-L-threonine + NAD(+) = 3-amino-2-oxopropyl phosphate + CO2 + NADH. It functions in the pathway cofactor biosynthesis; pyridoxine 5'-phosphate biosynthesis; pyridoxine 5'-phosphate from D-erythrose 4-phosphate: step 4/5. In terms of biological role, catalyzes the NAD(P)-dependent oxidation of 4-(phosphooxy)-L-threonine (HTP) into 2-amino-3-oxo-4-(phosphooxy)butyric acid which spontaneously decarboxylates to form 3-amino-2-oxopropyl phosphate (AHAP). The protein is 4-hydroxythreonine-4-phosphate dehydrogenase of Azoarcus sp. (strain BH72).